A 740-amino-acid polypeptide reads, in one-letter code: Elongation factor 2 (740 aa).

The tr-type G domain maps to 23–264; the sequence is AQIRNAGTLA…MIIEHVPPPN (242 aa). Residues 32–39, 98–102, and 152–155 contribute to the GTP site; these read AHVDHGKT, DTPGH, and NKID. His-605 carries the diphthamide modification.

Belongs to the TRAFAC class translation factor GTPase superfamily. Classic translation factor GTPase family. EF-G/EF-2 subfamily.

Its subcellular location is the cytoplasm. Its function is as follows. Catalyzes the GTP-dependent ribosomal translocation step during translation elongation. During this step, the ribosome changes from the pre-translocational (PRE) to the post-translocational (POST) state as the newly formed A-site-bound peptidyl-tRNA and P-site-bound deacylated tRNA move to the P and E sites, respectively. Catalyzes the coordinated movement of the two tRNA molecules, the mRNA and conformational changes in the ribosome. This Pyrobaculum islandicum (strain DSM 4184 / JCM 9189 / GEO3) protein is Elongation factor 2.